Reading from the N-terminus, the 333-residue chain is Ornithine carbamoyltransferase (333 aa).

Residues 56–59 (STRT), Q83, R107, and 134–137 (HPTQ) each bind carbamoyl phosphate. Residues N167, D231, and 235 to 236 (SM) each bind L-ornithine. Carbamoyl phosphate-binding positions include 273-274 (CL) and R318.

Belongs to the aspartate/ornithine carbamoyltransferase superfamily. OTCase family.

Its subcellular location is the cytoplasm. It catalyses the reaction carbamoyl phosphate + L-ornithine = L-citrulline + phosphate + H(+). The protein operates within amino-acid biosynthesis; L-arginine biosynthesis; L-arginine from L-ornithine and carbamoyl phosphate: step 1/3. Functionally, reversibly catalyzes the transfer of the carbamoyl group from carbamoyl phosphate (CP) to the N(epsilon) atom of ornithine (ORN) to produce L-citrulline. The protein is Ornithine carbamoyltransferase of Staphylococcus aureus (strain MSSA476).